Consider the following 256-residue polypeptide: Acetyl-coenzyme A carboxylase carboxyl transferase subunit alpha (256 aa).

In terms of domain architecture, CoA carboxyltransferase C-terminal spans 1–236 (MTDVARILKE…KLHLIDEITQ (236 aa)).

The protein belongs to the AccA family. In terms of assembly, acetyl-CoA carboxylase is a heterohexamer composed of biotin carboxyl carrier protein (AccB), biotin carboxylase (AccC) and two subunits each of ACCase subunit alpha (AccA) and ACCase subunit beta (AccD).

It localises to the cytoplasm. The enzyme catalyses N(6)-carboxybiotinyl-L-lysyl-[protein] + acetyl-CoA = N(6)-biotinyl-L-lysyl-[protein] + malonyl-CoA. It functions in the pathway lipid metabolism; malonyl-CoA biosynthesis; malonyl-CoA from acetyl-CoA: step 1/1. In terms of biological role, component of the acetyl coenzyme A carboxylase (ACC) complex. First, biotin carboxylase catalyzes the carboxylation of biotin on its carrier protein (BCCP) and then the CO(2) group is transferred by the carboxyltransferase to acetyl-CoA to form malonyl-CoA. In Streptococcus equi subsp. zooepidemicus (strain H70), this protein is Acetyl-coenzyme A carboxylase carboxyl transferase subunit alpha.